Here is a 349-residue protein sequence, read N- to C-terminus: tRNA (guanine(26)-N(2))-dimethyltransferase (349 aa).

Residues 1–343 (MEVEEGRARV…ADRDVVVKIL (343 aa)) form the Trm1 methyltransferase domain. S-adenosyl-L-methionine is bound by residues Arg25, Arg50, Asp66, Asp92, and Ala93.

It belongs to the class I-like SAM-binding methyltransferase superfamily. Trm1 family.

The enzyme catalyses guanosine(26) in tRNA + 2 S-adenosyl-L-methionine = N(2)-dimethylguanosine(26) in tRNA + 2 S-adenosyl-L-homocysteine + 2 H(+). Its function is as follows. Dimethylates a single guanine residue at position 26 of a number of tRNAs using S-adenosyl-L-methionine as donor of the methyl groups. This chain is tRNA (guanine(26)-N(2))-dimethyltransferase, found in Archaeoglobus fulgidus (strain ATCC 49558 / DSM 4304 / JCM 9628 / NBRC 100126 / VC-16).